A 213-amino-acid chain; its full sequence is Uridine kinase (213 aa).

15-22 lines the ATP pocket; it reads GASASGKS.

This sequence belongs to the uridine kinase family.

Its subcellular location is the cytoplasm. It carries out the reaction uridine + ATP = UMP + ADP + H(+). The catalysed reaction is cytidine + ATP = CMP + ADP + H(+). It functions in the pathway pyrimidine metabolism; CTP biosynthesis via salvage pathway; CTP from cytidine: step 1/3. It participates in pyrimidine metabolism; UMP biosynthesis via salvage pathway; UMP from uridine: step 1/1. The chain is Uridine kinase from Proteus mirabilis (strain HI4320).